The following is a 202-amino-acid chain: MRMEGENWVYEVRGIPDEFFQRSEGIPMTKREIRIISLSDLRIRPGMRVMDIGCGSGSMTVEISNIIGENGSVTGLDVSGEAADLTMRNCRNLCRFSNYRIVISDVYKYDSDEEFDAVFVGGGTARIHDLFERIERMVHHASRVVVNAIQIHTAYLSLEEMNTRGYSGVNITQVMVSNGMRTSEGYAMIARNPVFIISGDAP.

S-adenosyl-L-methionine contacts are provided by residues threonine 29, glycine 53 to glycine 57, aspartate 77, and valine 106.

The protein belongs to the methyltransferase superfamily. Archaeal-type CbiT family.

The enzyme catalyses Co-precorrin-6B + S-adenosyl-L-methionine = Co-precorrin-7 + S-adenosyl-L-homocysteine + CO2. It participates in cofactor biosynthesis; adenosylcobalamin biosynthesis; cob(II)yrinate a,c-diamide from sirohydrochlorin (anaerobic route): step 8/10. Its function is as follows. Catalyzes the methylation of C-15 in cobalt-precorrin-6B followed by the decarboxylation of C-12 to form cobalt-precorrin-7. The protein is Probable cobalt-precorrin-6B C(15)-methyltransferase (decarboxylating) of Thermoplasma acidophilum (strain ATCC 25905 / DSM 1728 / JCM 9062 / NBRC 15155 / AMRC-C165).